Consider the following 710-residue polypeptide: Dihydroxyacetone synthase (710 aa).

Thiamine diphosphate-binding positions include His-78 and Gly-128 to Leu-130. Mg(2+) contacts are provided by Asp-169, Asn-199, and Val-201. Asn-199 contributes to the thiamine diphosphate binding site. Thiamine diphosphate is bound by residues His-275, Glu-433, and Phe-461. Glu-433 serves as the catalytic Proton donor. The Microbody targeting signal motif lies at Asn-708 to Leu-710.

Belongs to the transketolase family. Requires Mg(2+) as cofactor. The cofactor is Ca(2+). Mn(2+) is required as a cofactor. It depends on Co(2+) as a cofactor. Thiamine diphosphate serves as cofactor.

The protein localises to the peroxisome. The enzyme catalyses D-xylulose 5-phosphate + formaldehyde = dihydroxyacetone + D-glyceraldehyde 3-phosphate. Its function is as follows. This is the major methanol assimilatory enzyme from the methylotrophic Hansenula polymorpha. The polypeptide is Dihydroxyacetone synthase (DAS) (Pichia angusta (Yeast)).